We begin with the raw amino-acid sequence, 126 residues long: EDNCKLKFLELKKRIFRFIIFRIDGQQVVVEKLGNPQETYDDFTASLPADECRYAVFDFDFTTNENCQKSKIFFIAWSPDSSRVRMKMVYASSKDRFKRELDGIQVELQATDPSEMSFDIIKSRAL.

The 126-residue stretch at 1-126 (EDNCKLKFLE…SFDIIKSRAL (126 aa)) folds into the ADF-H domain.

Belongs to the actin-binding proteins ADF family. Preferentially in mature anther.

Actin-depolymerizing protein. Severs actin filaments (F-actin) and binds to actin monomers. The sequence is that of Actin-depolymerizing factor from Brassica napus (Rape).